The following is a 250-amino-acid chain: Leucyl/phenylalanyl-tRNA--protein transferase (250 aa).

The tract at residues 1–21 (MTPFRRPTVLGTSASAPFPPA) is disordered.

Belongs to the L/F-transferase family.

It localises to the cytoplasm. It catalyses the reaction N-terminal L-lysyl-[protein] + L-leucyl-tRNA(Leu) = N-terminal L-leucyl-L-lysyl-[protein] + tRNA(Leu) + H(+). The catalysed reaction is N-terminal L-arginyl-[protein] + L-leucyl-tRNA(Leu) = N-terminal L-leucyl-L-arginyl-[protein] + tRNA(Leu) + H(+). It carries out the reaction L-phenylalanyl-tRNA(Phe) + an N-terminal L-alpha-aminoacyl-[protein] = an N-terminal L-phenylalanyl-L-alpha-aminoacyl-[protein] + tRNA(Phe). Its function is as follows. Functions in the N-end rule pathway of protein degradation where it conjugates Leu, Phe and, less efficiently, Met from aminoacyl-tRNAs to the N-termini of proteins containing an N-terminal arginine or lysine. In Xanthomonas euvesicatoria pv. vesicatoria (strain 85-10) (Xanthomonas campestris pv. vesicatoria), this protein is Leucyl/phenylalanyl-tRNA--protein transferase.